The sequence spans 363 residues: Histidinol-phosphate aminotransferase (363 aa).

Lysine 218 is subject to N6-(pyridoxal phosphate)lysine.

This sequence belongs to the class-II pyridoxal-phosphate-dependent aminotransferase family. Histidinol-phosphate aminotransferase subfamily. As to quaternary structure, homodimer. Pyridoxal 5'-phosphate is required as a cofactor.

It catalyses the reaction L-histidinol phosphate + 2-oxoglutarate = 3-(imidazol-4-yl)-2-oxopropyl phosphate + L-glutamate. It participates in amino-acid biosynthesis; L-histidine biosynthesis; L-histidine from 5-phospho-alpha-D-ribose 1-diphosphate: step 7/9. This chain is Histidinol-phosphate aminotransferase, found in Xanthomonas oryzae pv. oryzae (strain MAFF 311018).